The chain runs to 195 residues: Dephospho-CoA kinase (195 aa).

Residues 3–195 (IVGLTGGIGS…IALHENYLNH (193 aa)) form the DPCK domain. Residue 11-16 (GSGKSA) coordinates ATP.

It belongs to the CoaE family.

The protein localises to the cytoplasm. The catalysed reaction is 3'-dephospho-CoA + ATP = ADP + CoA + H(+). It functions in the pathway cofactor biosynthesis; coenzyme A biosynthesis; CoA from (R)-pantothenate: step 5/5. Catalyzes the phosphorylation of the 3'-hydroxyl group of dephosphocoenzyme A to form coenzyme A. This chain is Dephospho-CoA kinase, found in Acinetobacter baylyi (strain ATCC 33305 / BD413 / ADP1).